The following is a 418-amino-acid chain: Tyrosine--tRNA ligase (418 aa).

Residue Tyr34 participates in L-tyrosine binding. Residues 39–48 (PTADSLHLGH) carry the 'HIGH' region motif. Positions 169 and 173 each coordinate L-tyrosine. Residues 229–233 (KFGKS) carry the 'KMSKS' region motif. Lys232 lines the ATP pocket. The S4 RNA-binding domain occupies 352-418 (LNLVDMLVTA…GKKKYAVLTY (67 aa)).

It belongs to the class-I aminoacyl-tRNA synthetase family. TyrS type 1 subfamily. As to quaternary structure, homodimer.

Its subcellular location is the cytoplasm. The enzyme catalyses tRNA(Tyr) + L-tyrosine + ATP = L-tyrosyl-tRNA(Tyr) + AMP + diphosphate + H(+). Its function is as follows. Catalyzes the attachment of tyrosine to tRNA(Tyr) in a two-step reaction: tyrosine is first activated by ATP to form Tyr-AMP and then transferred to the acceptor end of tRNA(Tyr). In Streptococcus pyogenes serotype M5 (strain Manfredo), this protein is Tyrosine--tRNA ligase.